Reading from the N-terminus, the 376-residue chain is Transmembrane protein 183A (376 aa).

Disordered regions lie at residues 1–20 (MARG…AMPK) and 100–127 (MDAQ…ELDG). The chain crosses the membrane as a helical span at residues 300 to 320 (LNFIFIPIVMGMIFTLFTINV).

This sequence belongs to the TMEM183 family.

Its subcellular location is the membrane. This is Transmembrane protein 183A (TMEM183A) from Homo sapiens (Human).